The chain runs to 517 residues: GMP synthase [glutamine-hydrolyzing] (517 aa).

A Glutamine amidotransferase type-1 domain is found at 9-199; sequence RILILDFGSQ…VLNACGCEGL (191 aa). Residue C86 is the Nucleophile of the active site. Residues H173 and E175 contribute to the active site. The GMPS ATP-PPase domain occupies 200–392; sequence WTSASIIEDA…LGLPYNMLYR (193 aa). Residue 227 to 233 coordinates ATP; it reads SGGVDSS.

In terms of assembly, homodimer.

It carries out the reaction XMP + L-glutamine + ATP + H2O = GMP + L-glutamate + AMP + diphosphate + 2 H(+). Its pathway is purine metabolism; GMP biosynthesis; GMP from XMP (L-Gln route): step 1/1. Functionally, catalyzes the synthesis of GMP from XMP. In Vibrio atlanticus (strain LGP32) (Vibrio splendidus (strain Mel32)), this protein is GMP synthase [glutamine-hydrolyzing].